The primary structure comprises 534 residues: Prolyl 4-hydroxylase subunit alpha-1 (534 aa).

The signal sequence occupies residues 1–17 (MIWYILIIGILLPQSLA). Asparagine 113 carries N-linked (GlcNAc...) asparagine glycosylation. One copy of the TPR repeat lies at 205 to 238 (VSVLDYLSYAVYQQGDLDKALLLTKKLLELDPEH). Asparagine 259 carries an N-linked (GlcNAc...) asparagine glycan. A Fe2OG dioxygenase domain is found at 411–519 (TAEELQVANY…KWVSNKWLHE (109 aa)). 3 residues coordinate Fe cation: histidine 429, aspartate 431, and histidine 500. Lysine 510 provides a ligand contact to 2-oxoglutarate.

It belongs to the P4HA family. As to quaternary structure, heterotetramer of two alpha-1 chains and two beta chains (P4HB)(the beta chain is the multi-functional PDI), where P4HB plays the role of a structural subunit; this tetramer catalyzes the formation of 4-hydroxyproline in collagen. Fe(2+) is required as a cofactor. It depends on L-ascorbate as a cofactor. As to expression, expressed in the heart, liver, skeletal muscle, kidney, placenta, lung and pancreas.

It is found in the endoplasmic reticulum lumen. It catalyses the reaction L-prolyl-[collagen] + 2-oxoglutarate + O2 = trans-4-hydroxy-L-prolyl-[collagen] + succinate + CO2. With respect to regulation, inhibited by poly(L-proline). Functionally, catalyzes the post-translational formation of 4-hydroxyproline in -Xaa-Pro-Gly- sequences in collagens and other proteins. The polypeptide is Prolyl 4-hydroxylase subunit alpha-1 (P4HA1) (Homo sapiens (Human)).